The primary structure comprises 447 residues: Trichothecene C-3 esterase (447 aa).

The first 22 residues, Met1 to Ala22, serve as a signal peptide directing secretion. Residues Asn59, Asn66, Asn136, and Asn189 are each glycosylated (N-linked (GlcNAc...) asparagine). The active-site Charge relay system is the Ser202. N-linked (GlcNAc...) asparagine glycosylation is found at Asn238, Asn284, and Asn314. Residues Asp352 and His384 each act as charge relay system in the active site. 2 N-linked (GlcNAc...) asparagine glycosylation sites follow: Asn389 and Asn423.

This sequence belongs to the AB hydrolase superfamily. Lipase family.

It participates in sesquiterpene biosynthesis; trichothecene biosynthesis. Trichothecene C-3 esterase; part of the core gene cluster that mediates the biosynthesis of trichothecenes, a very large family of chemically related bicyclic sesquiterpene compounds acting as mycotoxins, including T2-toxin. The biosynthesis of trichothecenes begins with the cyclization of farnesyl diphosphate to trichodiene and is catalyzed by the trichodiene synthase TRI5. Trichodiene undergoes a series of oxygenations catalyzed by the cytochrome P450 monooxygenase TRI4. TRI4 controls the addition of four oxygens at C-2, C-3, C-11, and the C-12, C-13-epoxide to form the intermediate isotrichotriol. Isotrichotriol then undergoes a non-enzymatic isomerization and cyclization to form isotrichodermol. During this process, the oxygen at the C-2 position becomes the pyran ring oxygen and the hydroxyl group at C-11 is lost. More complex type A trichothecenes are built by modifying isotrichodermol through a series of paired hydroxylation and acetylation or acylation steps. Isotrichodermol is converted to isotrichodermin by the acetyltransferase TRI101. TRI101 encodes a C-3 transacetylase that acts as a self-protection or resistance factor during biosynthesis and that the presence of a free C-3 hydroxyl group is a key component of Fusarium trichothecene phytotoxicity. A second hydroxyl group is added to C-15 by the trichothecene C-15 hydroxylase TRI11, producing 15-decalonectrin, which is then acetylated by TRI3, producing calonectrin. A third hydroxyl group is added at C-4 by the cytochrome P450 monooxygenase TRI13, converting calonectrin to 3,15-diacetoxyspirpenol, which is subsequently acetylated by the acetyltransferase TRI7. A fourth hydroxyl group is added to C-8 by the cytochrome P450 monooxygenase TRI1, followed by the addition of an isovaleryl moiety by TRI16. Finally, the acetyl group is removed from the C-3 position by the trichothecene C-3 esterase TRI8 to produce T-2 toxin. The sequence is that of Trichothecene C-3 esterase from Fusarium sporotrichioides.